The following is a 391-amino-acid chain: ATP phosphoribosyltransferase regulatory subunit (391 aa).

It belongs to the class-II aminoacyl-tRNA synthetase family. HisZ subfamily. Heteromultimer composed of HisG and HisZ subunits.

It localises to the cytoplasm. The protein operates within amino-acid biosynthesis; L-histidine biosynthesis; L-histidine from 5-phospho-alpha-D-ribose 1-diphosphate: step 1/9. Functionally, required for the first step of histidine biosynthesis. May allow the feedback regulation of ATP phosphoribosyltransferase activity by histidine. In Prochlorococcus marinus (strain SARG / CCMP1375 / SS120), this protein is ATP phosphoribosyltransferase regulatory subunit.